The sequence spans 1019 residues: Sca1 complex protein phr (1019 aa).

4 disordered regions span residues 89-118 (IVINSSSSSSSSSSHHPHHQKTPSNSSSNF), 131-202 (AFNN…INNN), 265-287 (QQLNQNGGSNNGSTSNSTSNSAN), and 512-546 (STNNNNSGNNSNNNNGNSNGNSSNNNSNNNSTNNL). Low complexity predominate over residues 93–102 (SSSSSSSSSS). Positions 141–155 (NRKEKEKDKDKDHQD) are enriched in basic and acidic residues. The stretch at 158–188 (NINNINNINNNINNNINNNNNNNNNNNNNNN) forms a coiled coil. The segment covering 158–202 (NINNINNINNNINNNINNNNNNNNNNNNNNNMHNPTSSSPSINNN) has biased composition (low complexity). Residues 735–836 (EIKKKGYLFK…WIKAIKFNCF (102 aa)) enclose the PH domain. A compositionally biased stretch (low complexity) spans 860–872 (VAGSGSNNGNNNG). Disordered regions lie at residues 860–890 (VAGSGSNNGNNNGHLKRSDTTQQLNNSGSFI), 904–951 (NLSI…QQQL), and 977–1019 (SSYT…SKLK). Residues 879–890 (TTQQLNNSGSFI) show a composition bias toward polar residues. Low complexity predominate over residues 977 to 986 (SSYTDSMSGS). The segment covering 987 to 1019 (PPDSNGQVFPQSPQLKKTLFQRTTSFSKGSKLK) has biased composition (polar residues).

Component of the Sca1 complex composed of at least gefA, gefH, scaA, phr, and the protein phosphatase 2A subunits pppA and pho2B. Interacts directly with gefH.

Its subcellular location is the cell membrane. Functionally, component of the Sca1 complex, a regulator of cell motility, chemotaxis and signal relay. The Sca1 complex is recruited to the plasma membrane in a chemoattractant- and F-actin-dependent manner and is enriched at the leading edge of chemotaxing cells where it regulates F-actin dynamics and signal relay by controlling the activation of rasC and the downstream target of rapamycin complex 2 (TORC2)-Akt/protein kinase B (PKB) pathway. The chain is Sca1 complex protein phr from Dictyostelium discoideum (Social amoeba).